Here is a 568-residue protein sequence, read N- to C-terminus: Glycine--tRNA ligase (568 aa).

Residues Arg97 and Glu163 each contribute to the substrate site. ATP-binding positions include 195-197 (RNE), 205-210 (IRLREF), 322-323 (EC), and 441-444 (GIDR). Residue 210–214 (FTQAE) coordinates substrate. 437-441 (EPSFG) serves as a coordination point for substrate.

It belongs to the class-II aminoacyl-tRNA synthetase family.

Its subcellular location is the cytoplasm. The catalysed reaction is tRNA(Gly) + glycine + ATP = glycyl-tRNA(Gly) + AMP + diphosphate. Functionally, catalyzes the attachment of glycine to tRNA(Gly). In Pyrococcus furiosus (strain ATCC 43587 / DSM 3638 / JCM 8422 / Vc1), this protein is Glycine--tRNA ligase.